A 291-amino-acid chain; its full sequence is Tyrosine recombinase XerA (291 aa).

Positions 9-102 (PESGDLYNAF…AVRRFLKWIN (94 aa)) constitute a Core-binding (CB) domain. One can recognise a Tyr recombinase domain in the interval 115-279 (KEVKALDEIQ…VLDDLRNEYL (165 aa)). Residues Arg150, Lys175, His231, Arg234, and His257 contribute to the active site. The O-(3'-phospho-DNA)-tyrosine intermediate role is filled by Tyr266.

Belongs to the 'phage' integrase family. XerA subfamily.

It localises to the cytoplasm. Its function is as follows. Site-specific tyrosine recombinase, which acts by catalyzing the cutting and rejoining of the recombining DNA molecules. Probably involved in the resolution of chromosome dimers. Binds to the dif site. This chain is Tyrosine recombinase XerA, found in Saccharolobus solfataricus (strain ATCC 35092 / DSM 1617 / JCM 11322 / P2) (Sulfolobus solfataricus).